Reading from the N-terminus, the 506-residue chain is Anaerobic nitric oxide reductase transcription regulator NorR (506 aa).

Position 57 is a 4-aspartylphosphate (aspartate 57). The 230-residue stretch at 187-416 (MIGLSPAMTQ…LEHAIHRAVV (230 aa)) folds into the Sigma-54 factor interaction domain. Residues 215-222 (GETGTGKE) and 278-287 (ADNGTLFLDE) each bind ATP. Positions 481-500 (WAASARALETDVANLHRLAK) form a DNA-binding region, H-T-H motif.

It functions in the pathway nitrogen metabolism; nitric oxide reduction. Functionally, required for the expression of anaerobic nitric oxide (NO) reductase, acts as a transcriptional activator for at least the norVW operon. Activation also requires sigma-54. The chain is Anaerobic nitric oxide reductase transcription regulator NorR from Salmonella arizonae (strain ATCC BAA-731 / CDC346-86 / RSK2980).